A 244-amino-acid polypeptide reads, in one-letter code: Krueppel-like factor 9 (244 aa).

Disordered regions lie at residues 24–51 and 80–142; these read VPEHGGAPDAERLRLPEREVTKEHGDPG and SVCS…SEKR. Residues 32–51 are compositionally biased toward basic and acidic residues; the sequence is DAERLRLPEREVTKEHGDPG. Ser122 bears the Phosphoserine mark. 3 consecutive C2H2-type zinc fingers follow at residues 143–167, 173–197, and 203–225; these read HKCPYSGCGKVYGKSSHLKAHYRVH, FPCTWPDCLKKFSRSDELTRHYRTH, and FRCPLCEKRFMRSDHLTKHARRH.

This sequence belongs to the Sp1 C2H2-type zinc-finger protein family. As to quaternary structure, interacts with ZZEF1.

Its subcellular location is the nucleus. Its function is as follows. Transcription factor that binds to GC box promoter elements. Selectively activates mRNA synthesis from genes containing tandem repeats of GC boxes but represses genes with a single GC box. Acts as an epidermal circadian transcription factor regulating keratinocyte proliferation. The sequence is that of Krueppel-like factor 9 (KLF9) from Sus scrofa (Pig).